A 166-amino-acid chain; its full sequence is Regulatory protein RecX (166 aa).

Belongs to the RecX family.

Its subcellular location is the cytoplasm. In terms of biological role, modulates RecA activity. The chain is Regulatory protein RecX from Escherichia coli O7:K1 (strain IAI39 / ExPEC).